The following is a 1102-amino-acid chain: Putative helicase/primase complex protein (1102 aa).

Disordered regions lie at residues threonine 1031–cysteine 1057 and glutamate 1082–threonine 1102.

The protein belongs to the asfivirus F1055L family.

Its function is as follows. May be involved in DNA replication. The sequence is that of Putative helicase/primase complex protein from African swine fever virus (isolate Tick/Malawi/Lil 20-1/1983) (ASFV).